The sequence spans 122 residues: Large ribosomal subunit protein uL18 (122 aa).

This sequence belongs to the universal ribosomal protein uL18 family. As to quaternary structure, part of the 50S ribosomal subunit; part of the 5S rRNA/L5/L18/L25 subcomplex. Contacts the 5S and 23S rRNAs.

This is one of the proteins that bind and probably mediate the attachment of the 5S RNA into the large ribosomal subunit, where it forms part of the central protuberance. The chain is Large ribosomal subunit protein uL18 from Dictyoglomus thermophilum (strain ATCC 35947 / DSM 3960 / H-6-12).